Here is a 448-residue protein sequence, read N- to C-terminus: UPF0210 protein Pars_1033 (448 aa).

It belongs to the UPF0210 family.

This is UPF0210 protein Pars_1033 from Pyrobaculum arsenaticum (strain DSM 13514 / JCM 11321 / PZ6).